Reading from the N-terminus, the 809-residue chain is Ribosome biogenesis protein ERB1 (809 aa).

Residues 1 to 107 are disordered; sequence MSKSSKVGMT…SDTRSITDAI (107 aa). Acidic residues-rich tracts occupy residues 30–70 and 77–97; these read AEVD…EDSD and LGEEEDPSDYDSENFSDEPQE. A required for interaction with NOP7 region spans residues 267–383; that stretch reads RFVPSKHEAK…LRKVPGYQES (117 aa). The interval 383-419 is required for interaction with YTM1; that stretch reads SVRERFERCLDLYLAPRVRHNKLNIDPESLIPELPSP. 2 WD repeats span residues 435–474 and 483–523; these read GHTDKIRTISIDPQGLWLATGSDDGSVRIWEILTGRQVFN and NDED…FDIE. The disordered stretch occupies residues 545 to 569; sequence EEKFKNDEGNEDEDDEDDSATSTAV. Over residues 553 to 563 the composition is skewed to acidic residues; it reads GNEDEDDEDDS. WD repeat units lie at residues 593-635, 638-676, 679-718, 722-762, and 778-809; these read QCRK…SQSP, KSKGIIMDAKFHPFKPQLFVASQRQVRIYDLAQQVLVKK, PGVRLLSTIDIHPRGDNLLASSYDKRVLWHDLDLSATPYK, YHEK…DLMT, and VNSIGILDLIWHPKEAWLFSAGADGTARLWTT.

This sequence belongs to the WD repeat BOP1/ERB1 family. As to quaternary structure, component of the NOP7 complex, composed of ERB1, NOP7 and YTM1. The complex is held together by ERB1, which interacts with NOP7 via its N-terminal domain and with YTM1 via a high-affinity interaction between the seven-bladed beta-propeller domains of the 2 proteins. The NOP7 complex associates with the 66S pre-ribosome.

It localises to the nucleus. Its subcellular location is the nucleolus. It is found in the nucleoplasm. Component of the NOP7 complex, which is required for maturation of the 25S and 5.8S ribosomal RNAs and formation of the 60S ribosome. The sequence is that of Ribosome biogenesis protein ERB1 from Scheffersomyces stipitis (strain ATCC 58785 / CBS 6054 / NBRC 10063 / NRRL Y-11545) (Yeast).